A 109-amino-acid chain; its full sequence is Anther-specific protein MZm3-3 (109 aa).

Residues 1 to 41 form the signal peptide; sequence MTATTTTAAGGGKVQPRGLPVALSLLLLLVLAAGLGGGAEA. 4 disulfide bridges follow: Cys-45/Cys-86, Cys-55/Cys-75, Cys-76/Cys-101, and Cys-88/Cys-108.

Belongs to the A9/FIL1 family. In terms of tissue distribution, tapetum of anthers.

Its subcellular location is the secreted. The chain is Anther-specific protein MZm3-3 from Zea mays (Maize).